The chain runs to 359 residues: Heme A synthase (359 aa).

Transmembrane regions (helical) follow at residues 8-28 (IMSI…VVGG), 94-114 (LLGR…YYLK), 124-144 (LLLI…MVKS), 159-179 (GHLL…LIII), and 215-235 (IIIF…GLDA). Histidine 274 is a heme binding site. Helical transmembrane passes span 276–296 (WFGI…IILN), 303–323 (MGMV…ITLV), and 328–348 (ILAA…FLFI). Histidine 334 is a heme binding site.

It belongs to the COX15/CtaA family. Type 2 subfamily. Interacts with CtaB. Heme b serves as cofactor.

Its subcellular location is the cell membrane. It carries out the reaction Fe(II)-heme o + 2 A + H2O = Fe(II)-heme a + 2 AH2. It participates in porphyrin-containing compound metabolism; heme A biosynthesis; heme A from heme O: step 1/1. Functionally, catalyzes the conversion of heme O to heme A by two successive hydroxylations of the methyl group at C8. The first hydroxylation forms heme I, the second hydroxylation results in an unstable dihydroxymethyl group, which spontaneously dehydrates, resulting in the formyl group of heme A. The sequence is that of Heme A synthase from Orientia tsutsugamushi (strain Ikeda) (Rickettsia tsutsugamushi).